The chain runs to 396 residues: MRPTHWSSNQCEVDFTAEALTTLSLSNRNHEEDPIQPVLKNSNLFLLNRDIWSLIINYLDAFDILRLMHSSRQFYYWLRKSAVDECCFNNNFLNLQPYQRTVPVASDLEWATEVDLYGNPPILKLQLRDSFVWSMLAKFQGLQTIALDGTGVTISSVTNILLNIPTVKTLSIRWCVGVCSLSLIEFLQNSKSRTFSLENLYVLGVKGLELLKPVLLDGSEDDTLTSNWHSRVILFQNALDALPTTHGNPVECDISRCPLNACKIAGQETELADLFSLQKVPACIYCLREWKKPICRYCIDLRSCLVCDSFVCPSCISLDFDLQIQAFARQHRVISTLGVVYPEREDSCFHKIKAAQWHQISPRSLLFQFQEQNHIHHKKIRRKLLAAGWKWPQSQI.

The F-box domain occupies 40-89 (KNSNLFLLNRDIWSLIINYLDAFDILRLMHSSRQFYYWLRKSAVDECCFN).

In terms of assembly, part of a SCF (SKP1-cullin-F-box) protein ligase complex. Interacts with skp1.

The protein localises to the cytoplasm. It participates in protein modification; protein ubiquitination. This chain is F-box protein pof13 (pof13), found in Schizosaccharomyces pombe (strain 972 / ATCC 24843) (Fission yeast).